A 174-amino-acid chain; its full sequence is Protein GrpE (174 aa).

Residues 1–35 (MAQDIKNEEVEEVQEEEVVETAEETTPEKSELDLA) form a disordered region. Residues 9–25 (EVEEVQEEEVVETAEET) show a composition bias toward acidic residues. Residues 26-35 (TPEKSELDLA) are compositionally biased toward basic and acidic residues.

The protein belongs to the GrpE family. In terms of assembly, homodimer.

The protein resides in the cytoplasm. Participates actively in the response to hyperosmotic and heat shock by preventing the aggregation of stress-denatured proteins, in association with DnaK and GrpE. It is the nucleotide exchange factor for DnaK and may function as a thermosensor. Unfolded proteins bind initially to DnaJ; upon interaction with the DnaJ-bound protein, DnaK hydrolyzes its bound ATP, resulting in the formation of a stable complex. GrpE releases ADP from DnaK; ATP binding to DnaK triggers the release of the substrate protein, thus completing the reaction cycle. Several rounds of ATP-dependent interactions between DnaJ, DnaK and GrpE are required for fully efficient folding. In Streptococcus pneumoniae (strain ATCC 700669 / Spain 23F-1), this protein is Protein GrpE.